The sequence spans 644 residues: Magnetosome protein MamZ (644 aa).

Residues 1–427 (MPRNAEAPAK…YAAWLLANGI (427 aa)) are major facilitator domain. 18 consecutive transmembrane segments (helical) span residues 22–42 (WNII…SISI), 63–83 (ADIQ…FGLL), 92–112 (IIAL…LSLQ), 113–133 (VGLA…VLLT), 159–179 (LMGN…AIVM), 185–205 (PGGV…GFQL), 254–274 (VIIL…LVGV), 281–301 (AHAA…VPLW), 311–331 (ISAI…LGMF), 337–357 (WLVA…FVTL), 369–389 (ILGA…VMLV), 403–423 (APFI…AWLL), 440–460 (TVDW…WLVG), 478–498 (VGFV…ISLA), 518–538 (IGLF…ALEW), 553–573 (PFIL…FTSA), 588–608 (LHSA…LAAN), and 612–629 (GEPY…WYRF). Residues 488–599 (WAFTFLIISL…SATYVINALV (112 aa)) are ferric reductase-like domain.

This sequence in the N-terminal section; belongs to the major facilitator superfamily.

The protein localises to the magnetosome membrane. Its function is as follows. Required for correct biomineralization of the magnetosome; probably converts and then transports some form of iron. It is partially functionally redundant with MamH. May function with MamX, MamY amd Mms6. The sequence is that of Magnetosome protein MamZ from Paramagnetospirillum magneticum (strain ATCC 700264 / AMB-1) (Magnetospirillum magneticum).